Consider the following 150-residue polypeptide: 6,7-dimethyl-8-ribityllumazine synthase (150 aa).

5-amino-6-(D-ribitylamino)uracil-binding positions include phenylalanine 11, 42-44 (IFE), and 73-75 (CAI). Residue 78 to 79 (ES) coordinates (2S)-2-hydroxy-3-oxobutyl phosphate. Histidine 81 acts as the Proton donor in catalysis. Asparagine 106 contributes to the 5-amino-6-(D-ribitylamino)uracil binding site. (2S)-2-hydroxy-3-oxobutyl phosphate is bound at residue arginine 120.

Belongs to the DMRL synthase family.

The enzyme catalyses (2S)-2-hydroxy-3-oxobutyl phosphate + 5-amino-6-(D-ribitylamino)uracil = 6,7-dimethyl-8-(1-D-ribityl)lumazine + phosphate + 2 H2O + H(+). It functions in the pathway cofactor biosynthesis; riboflavin biosynthesis; riboflavin from 2-hydroxy-3-oxobutyl phosphate and 5-amino-6-(D-ribitylamino)uracil: step 1/2. Its function is as follows. Catalyzes the formation of 6,7-dimethyl-8-ribityllumazine by condensation of 5-amino-6-(D-ribitylamino)uracil with 3,4-dihydroxy-2-butanone 4-phosphate. This is the penultimate step in the biosynthesis of riboflavin. The chain is 6,7-dimethyl-8-ribityllumazine synthase from Paramagnetospirillum magneticum (strain ATCC 700264 / AMB-1) (Magnetospirillum magneticum).